A 222-amino-acid chain; its full sequence is Glutathione S-transferase A4 (222 aa).

M1 bears the N-acetylmethionine mark. Residues 3–83 (ARPKLHYPNG…YIADKHNLFG (81 aa)) enclose the GST N-terminal domain. Glutathione contacts are provided by residues Y9, 54 to 55 (QV), and 67 to 68 (QT). The GST C-terminal domain occupies 85-208 (NLKERTLIDM…EPGSKKKPPP (124 aa)). Y212 lines the substrate pocket.

Belongs to the GST superfamily. Alpha family. As to quaternary structure, homodimer. In terms of tissue distribution, expressed at a high level in brain, placenta, and skeletal muscle and much lower in lung and liver.

Its subcellular location is the cytoplasm. The enzyme catalyses RX + glutathione = an S-substituted glutathione + a halide anion + H(+). In terms of biological role, conjugation of reduced glutathione to a wide number of exogenous and endogenous hydrophobic electrophiles. This isozyme has a high catalytic efficiency with 4-hydroxyalkenals such as 4-hydroxynonenal (4-HNE). In Homo sapiens (Human), this protein is Glutathione S-transferase A4 (GSTA4).